A 258-amino-acid chain; its full sequence is Sec-independent protein translocase protein TatC (258 aa).

Topologically, residues 2–23 are cytoplasmic; the sequence is SVEDTQPLITHLIELRKRLLNC. A helical transmembrane segment spans residues 24–44; that stretch reads IISVIVIFLCLVYFANDIYHL. Residues 45-75 lie on the Periplasmic side of the membrane; sequence VSAPLIKQLPQGSTMIATDVASPFFTPIKLT. A helical transmembrane segment spans residues 76-96; it reads FMVSLILSAPVILYQVWAFIA. Topologically, residues 97–115 are cytoplasmic; it reads PALYKHERRLVVPLLVSSS. The chain crosses the membrane as a helical span at residues 116–136; that stretch reads LLFYIGMAFAYFVVFPLAFGF. Residues 137–156 lie on the Periplasmic side of the membrane; it reads LANTAPEGVQVSTDIASYLS. Residues 157–177 form a helical membrane-spanning segment; it reads FVMALFMAFGVSFEVPVAIVL. Residues 178-192 lie on the Cytoplasmic side of the membrane; it reads LCWMGITSPEDLRKK. A helical membrane pass occupies residues 193-210; sequence RPYVLVGAFVVGMLLTPP. Position 211 (aspartate 211) is a topological domain, periplasmic. The helical transmembrane segment at 212 to 232 threads the bilayer; sequence VFSQTLLAIPMYCLFEIGVFF. Over 233 to 258 the chain is Cytoplasmic; sequence SRFYVGKGRNREEENDAEAESEKTEE.

Belongs to the TatC family. As to quaternary structure, the Tat system comprises two distinct complexes: a TatABC complex, containing multiple copies of TatA, TatB and TatC subunits, and a separate TatA complex, containing only TatA subunits. Substrates initially bind to the TatABC complex, which probably triggers association of the separate TatA complex to form the active translocon.

Its subcellular location is the cell inner membrane. Its function is as follows. Part of the twin-arginine translocation (Tat) system that transports large folded proteins containing a characteristic twin-arginine motif in their signal peptide across membranes. Together with TatB, TatC is part of a receptor directly interacting with Tat signal peptides. The sequence is that of Sec-independent protein translocase protein TatC from Escherichia coli O6:H1 (strain CFT073 / ATCC 700928 / UPEC).